We begin with the raw amino-acid sequence, 203 residues long: Flagellar transcriptional regulator FlhC (203 aa).

Residues C161, C164, C181, and C184 each coordinate Zn(2+).

It belongs to the FlhC family. In terms of assembly, heterohexamer composed of two FlhC and four FlhD subunits. Each FlhC binds a FlhD dimer, forming a heterotrimer, and a hexamer assembles by dimerization of two heterotrimers. It depends on Zn(2+) as a cofactor.

Its subcellular location is the cytoplasm. Functions in complex with FlhD as a master transcriptional regulator that regulates transcription of several flagellar and non-flagellar operons by binding to their promoter region. Activates expression of class 2 flagellar genes, including fliA, which is a flagellum-specific sigma factor that turns on the class 3 genes. Also regulates genes whose products function in a variety of physiological pathways. The sequence is that of Flagellar transcriptional regulator FlhC from Cupriavidus necator (strain ATCC 17699 / DSM 428 / KCTC 22496 / NCIMB 10442 / H16 / Stanier 337) (Ralstonia eutropha).